The primary structure comprises 330 residues: uncharacterized protein (330 aa).

The 239-residue stretch at 4-242 folds into the ABC transporter domain; the sequence is LSIQNLVVEY…AGEVLFEQST (239 aa). Residue 40-47 coordinates ATP; sequence GPSGCGKT. 210-330 contacts a nucleoside 3',5'-cyclic phosphate; sequence DRVVELTPDF…LIEHRALAND (121 aa).

It belongs to the ABC transporter superfamily. The complex is composed of two ATP-binding proteins (MT0079), two transmembrane proteins (MT0078) and a solute-binding protein.

In terms of biological role, probably part of an ABC transporter complex. Probably responsible for energy coupling to the transport system. This is an uncharacterized protein from Mycobacterium tuberculosis (strain CDC 1551 / Oshkosh).